The following is a 157-amino-acid chain: DNA gyrase inhibitor (157 aa).

It belongs to the DNA gyrase inhibitor family. Interacts with DNA gyrase.

The protein resides in the cytoplasm. Functionally, inhibits the supercoiling activity of DNA gyrase. Acts by inhibiting DNA gyrase at an early step, prior to (or at the step of) binding of DNA by the gyrase. It protects cells against toxins that target DNA gyrase, by inhibiting activity of these toxins and reducing the formation of lethal double-strand breaks in the cell. This Cronobacter sakazakii (strain ATCC BAA-894) (Enterobacter sakazakii) protein is DNA gyrase inhibitor.